Reading from the N-terminus, the 380-residue chain is MASLRKSHPLLKIANHILVDLPAPSNISAWWNFGSLLGLCLATQILTGLFLAMHYTSDIATAFSSVMHICRDVNYGWLIRNMHANGASFFFICIYLHIGRGLYYGSYLYKETWNVGVALFLLTMMTAFVGYVLPWGQMSFWGATVITNLMSAVPYVGNDLVQWIWGGFSVDNATLTRFFAFHFLFPFVIAALTAIHLLFLHETGSNNPAGLNSDADKVTFHPYFSYKDLLGFATLMVTLTSLALFSPNLLGDPDNFTPANPLVTPPHIKPEWYFLFAYAILRSIPNKLGGVLALLSSILILTAVPALHASKQRSTTFRPITQLLFWTLVAAVLVLTWIGGMPVEHPFIIIGQIASLLYFMLFLTLIPAAALAENKALEWN.

A run of 4 helical transmembrane segments spans residues 33–53 (FGSL…FLAM), 77–98 (WLIR…YLHI), 113–133 (WNVG…GYVL), and 178–198 (FFAF…IHLL). The heme b site is built by H83 and H97. Heme b-binding residues include H182 and H196. Residue H201 coordinates a ubiquinone. The next 4 membrane-spanning stretches (helical) occupy residues 226-246 (YKDL…ALFS), 288-308 (LGGV…PALH), 320-340 (ITQL…WIGG), and 347-367 (FIII…TLIP).

This sequence belongs to the cytochrome b family. As to quaternary structure, the cytochrome bc1 complex contains 3 respiratory subunits (MT-CYB, CYC1 and UQCRFS1), 2 core proteins (UQCRC1 and UQCRC2) and probably 6 low-molecular weight proteins. Heme b serves as cofactor.

The protein resides in the mitochondrion inner membrane. Its function is as follows. Component of the ubiquinol-cytochrome c reductase complex (complex III or cytochrome b-c1 complex) that is part of the mitochondrial respiratory chain. The b-c1 complex mediates electron transfer from ubiquinol to cytochrome c. Contributes to the generation of a proton gradient across the mitochondrial membrane that is then used for ATP synthesis. In Percopsis transmontana (Sand roller), this protein is Cytochrome b (mt-cyb).